We begin with the raw amino-acid sequence, 263 residues long: ATP synthase subunit a (263 aa).

Transmembrane regions (helical) follow at residues 31-51 (LDTL…FYSI), 89-109 (IGSL…MDLI), 133-153 (DPNA…VYTF), 205-225 (LFGN…LPFW), and 235-255 (AIFH…LTIV).

The protein belongs to the ATPase A chain family. In terms of assembly, F-type ATPases have 2 components, CF(1) - the catalytic core - and CF(0) - the membrane proton channel. CF(1) has five subunits: alpha(3), beta(3), gamma(1), delta(1), epsilon(1). CF(0) has three main subunits: a(1), b(2) and c(9-12). The alpha and beta chains form an alternating ring which encloses part of the gamma chain. CF(1) is attached to CF(0) by a central stalk formed by the gamma and epsilon chains, while a peripheral stalk is formed by the delta and b chains.

The protein localises to the cell inner membrane. Key component of the proton channel; it plays a direct role in the translocation of protons across the membrane. This Dichelobacter nodosus (strain VCS1703A) protein is ATP synthase subunit a.